The sequence spans 389 residues: MVTVEEYRKAQRAEGPATILAIGTSTPSNCVDQSTYPDYYFRITNSEHKTELKEKFKRMCDKSMIKKRYMHLTEEILKENPNMCAYMAPSLDARQDIVVVEVPKLGKEAAQKAIKEWGQPKSKITHLVFCTTSGVDMPGCDYQLAKLLGLRPSVKRLMMYQQGCFVGGTVLRLAKDLAENNKGARVLVVCSEITAVTFRGPSESHLDSLVGQALFGDGAAAIIMGSDPIIGVERPLFELVSAAQTLVPDSEGAIDGHLREVGLTFHLLKDVPGLISKNIEKSLLEAFQPLGISDWNSLFWIAHPGGPAILDQVELKLGLKQEKLRATREVLSNYGNMSSACVLFILDEMRKASTNEGLGTTGEGLEWGVLFGFGPGLTVETVVLHSVAT.

Cys164 is a catalytic residue.

The protein belongs to the thiolase-like superfamily. Chalcone/stilbene synthases family.

It catalyses the reaction (E)-4-coumaroyl-CoA + 3 malonyl-CoA + 3 H(+) = 2',4,4',6'-tetrahydroxychalcone + 3 CO2 + 4 CoA. The protein operates within secondary metabolite biosynthesis; flavonoid biosynthesis. Functionally, the primary product of this enzyme is 4,2',4',6'-tetrahydroxychalcone (also termed naringenin-chalcone or chalcone) which can under specific conditions spontaneously isomerize into naringenin. This Solanum tuberosum (Potato) protein is Chalcone synthase 1A (CHS1A).